The following is a 43-amino-acid chain: Photosystem II reaction center protein Y (43 aa).

The chain crosses the membrane as a helical span at residues 8–26; that stretch reads LFLVVAPILAAVSWAAFNI.

The protein belongs to the PsbY family. As to quaternary structure, PSII is composed of 1 copy each of membrane proteins PsbA, PsbB, PsbC, PsbD, PsbE, PsbF, PsbH, PsbI, PsbJ, PsbK, PsbL, PsbM, PsbT, PsbX, PsbY, PsbZ, Psb30/Ycf12, peripheral proteins PsbO, CyanoQ (PsbQ), PsbU, PsbV and a large number of cofactors. It forms dimeric complexes.

The protein resides in the cellular thylakoid membrane. Loosely associated component of the core of photosystem II (PSII), it is not always seen in crystals. PSII is a light-driven water plastoquinone oxidoreductase, using light energy to abstract electrons from H(2)O, generating a proton gradient subsequently used for ATP formation. This chain is Photosystem II reaction center protein Y, found in Parasynechococcus marenigrum (strain WH8102).